A 100-amino-acid chain; its full sequence is RxLR effector protein Avrblb2 (100 aa).

An N-terminal signal peptide occupies residues 1 to 22 (MRSFLYGVLAFAVLARSSAVAA). Residues 43-57 (RSLRIEAQEVIQSGR) carry the RxLR-dEER motif. Residues 78 to 82 (RPDIK) carry the Calmodulin-binding motif motif.

The protein belongs to the RxLR effector family. In terms of assembly, interacts with the host papain-like cysteine protease C14. Interacts with the host calmodulin.

The protein localises to the secreted. It localises to the host cell membrane. In terms of biological role, secreted effector that acts as an elicitor of hypersensitive response (HR) specifically on plants carrying defense protein Rpi-blb2. Enhances P.infestans colonization of Nicotiana benthamiana leaves. Interacts with, and subsequently prevents secretion into the apoplast of the host papain-like cysteine protease C14, thus promoting virulence by interfering with the execution of host defenses. Associates with calmodulin at the host plasma membrane to interfere with plant defense-associated calcium signaling in hosts. This is RxLR effector protein Avrblb2 from Phytophthora infestans (strain T30-4) (Potato late blight agent).